We begin with the raw amino-acid sequence, 433 residues long: 23S rRNA (uracil(1939)-C(5))-methyltransferase RlmD (433 aa).

The TRAM domain occupies 10–68; it reads RTTTRQIITVSVNDLDSFGQGVARHNGKTLFIPGLLPQENAEVTVTEDKKQYARAKVVR. 4 residues coordinate [4Fe-4S] cluster: Cys-81, Cys-87, Cys-90, and Cys-162. S-adenosyl-L-methionine-binding residues include Gln-265, Phe-294, Asn-299, Glu-315, Asn-342, and Asp-363. Catalysis depends on Cys-389, which acts as the Nucleophile.

The protein belongs to the class I-like SAM-binding methyltransferase superfamily. RNA M5U methyltransferase family. RlmD subfamily.

The enzyme catalyses uridine(1939) in 23S rRNA + S-adenosyl-L-methionine = 5-methyluridine(1939) in 23S rRNA + S-adenosyl-L-homocysteine + H(+). In terms of biological role, catalyzes the formation of 5-methyl-uridine at position 1939 (m5U1939) in 23S rRNA. This is 23S rRNA (uracil(1939)-C(5))-methyltransferase RlmD from Shigella boydii serotype 4 (strain Sb227).